We begin with the raw amino-acid sequence, 417 residues long: Origin of replication complex subunit 4 (417 aa).

Residue 59 to 66 (GPRGSGKA) participates in ATP binding.

The protein belongs to the ORC4 family. As to quaternary structure, component of the origin recognition complex (ORC) composed of at least ORC1 (ORC1A or ORC1B), ORC2, ORC3, ORC4, ORC5 and ORC6. ORC is regulated in a cell-cycle and development dependent manner. It is sequentially assembled at the exit from anaphase of mitosis and disassembled as cells enter S phase. Interacts directly with ORC1A, ORC2, ORC3, ORC5 and ORC6. Follow a cell-cycle regulation with a peak at the G1/S-phase. Isoform AtORC4a is expressed at low levels ubiquitously. Isoform AtORC4b is mostly expressed in siliques, flowers and flower buds, and, to a lower exent, in roots, leaves and stems.

It is found in the nucleus. Component of the origin recognition complex (ORC) that binds origins of replication. DNA-binding is ATP-dependent. The specific DNA sequences that define origins of replication have not been identified yet. ORC is required to assemble the pre-replication complex necessary to initiate DNA replication. This Arabidopsis thaliana (Mouse-ear cress) protein is Origin of replication complex subunit 4.